A 240-amino-acid chain; its full sequence is Chromatin structure-remodeling complex protein BSH (240 aa).

Belongs to the SNF5 family. As to quaternary structure, interacts with SWI3A and SWI3B, but not with BRM. In terms of tissue distribution, expressed in roots, stems, leaves, flowers and siliques.

It is found in the nucleus. Functionally, component of a multiprotein complex equivalent of the yeast SWI/SNF complex, an ATP-dependent chromatin-remodeling complex, which is required for the positive and negative regulation of gene expression of a large number of genes. It changes chromatin structure by altering DNA-histone contacts within a nucleosome, leading eventually to a change in nucleosome position, thus facilitating or repressing binding of gene-specific transcription factors. This is Chromatin structure-remodeling complex protein BSH (BSH) from Arabidopsis thaliana (Mouse-ear cress).